The chain runs to 83 residues: Putative beta-neurotoxin RjAa12f (83 aa).

An N-terminal signal peptide occupies residues 1–18 (MKILIFIIASFMLIGVEC). The LCN-type CS-alpha/beta domain occupies 19 to 82 (KEGYPMGRDG…VWDSSTNKCG (64 aa)). Disulfide bonds link Cys29-Cys81, Cys33-Cys55, Cys40-Cys62, and Cys44-Cys64. Residue Gly83 is a propeptide.

Post-translationally, contains 4 disulfide bonds. Expressed by the venom gland.

The protein localises to the secreted. Its function is as follows. Beta toxins bind voltage-independently at site-4 of sodium channels (Nav) and shift the voltage of activation toward more negative potentials thereby affecting sodium channel activation and promoting spontaneous and repetitive firing. This toxin is lethal to insects (A.domestica). It is not toxic to mice and does not affect mammal F11 sodium channels. This Rhopalurus junceus (Caribbean blue scorpion) protein is Putative beta-neurotoxin RjAa12f.